Consider the following 430-residue polypeptide: Mothers against decapentaplegic homolog 9 (430 aa).

Residues 16-140 form the MH1 domain; the sequence is PAVKRLLGWK…YRRVETPVLP (125 aa). The Zn(2+) site is built by Cys68, Cys113, Cys125, and His130. Residues 186-222 form a disordered region; it reads CPAPPSSPGHVFPQSPCPTSYPHSPGSPSESDSPYQH. Residues 202–221 show a composition bias toward polar residues; it reads CPTSYPHSPGSPSESDSPYQ. The region spanning 236 to 430 is the MH2 domain; that stretch reads WCSVAYYELN…SPHNPISSVS (195 aa).

Belongs to the dwarfin/SMAD family. In terms of assembly, interaction with the co-SMAD SMAD4. Interacts with PEBP2-alpha subunit. Interacts with RANBP3L. In terms of processing, phosphorylated on serine by BMP (bone morphogenetic proteins) type 1 receptor kinase and activin type I receptor-like kinases (ALK-2, ALK-3 and ALK-6).

It is found in the cytoplasm. It localises to the nucleus. Functionally, transcriptional modulator activated by BMP (bone morphogenetic proteins) type 1 receptor kinase. SMAD9 is a receptor-regulated SMAD (R-SMAD). Has been shown to be activated by activin type I receptor-like kinases (ALK-2, ALK-3, ALK-6) which stimulate heteromerization between SMAD9 and SMAD4. May play a role in osteoblast differentiation and maturation. In Mus musculus (Mouse), this protein is Mothers against decapentaplegic homolog 9 (Smad9).